The chain runs to 392 residues: Probable tRNA sulfurtransferase (392 aa).

The THUMP domain maps to 60-162 (QQVINDLQQV…HDCAIVYGHK (103 aa)). Residues 180 to 181 (LL), 205 to 206 (TF), arginine 264, glycine 286, and glutamine 295 each bind ATP.

The protein belongs to the ThiI family.

The protein resides in the cytoplasm. The enzyme catalyses [ThiI sulfur-carrier protein]-S-sulfanyl-L-cysteine + a uridine in tRNA + 2 reduced [2Fe-2S]-[ferredoxin] + ATP + H(+) = [ThiI sulfur-carrier protein]-L-cysteine + a 4-thiouridine in tRNA + 2 oxidized [2Fe-2S]-[ferredoxin] + AMP + diphosphate. The catalysed reaction is [ThiS sulfur-carrier protein]-C-terminal Gly-Gly-AMP + S-sulfanyl-L-cysteinyl-[cysteine desulfurase] + AH2 = [ThiS sulfur-carrier protein]-C-terminal-Gly-aminoethanethioate + L-cysteinyl-[cysteine desulfurase] + A + AMP + 2 H(+). It participates in cofactor biosynthesis; thiamine diphosphate biosynthesis. Catalyzes the ATP-dependent transfer of a sulfur to tRNA to produce 4-thiouridine in position 8 of tRNAs, which functions as a near-UV photosensor. Also catalyzes the transfer of sulfur to the sulfur carrier protein ThiS, forming ThiS-thiocarboxylate. This is a step in the synthesis of thiazole, in the thiamine biosynthesis pathway. The sulfur is donated as persulfide by IscS. The chain is Probable tRNA sulfurtransferase from Ureaplasma urealyticum serovar 10 (strain ATCC 33699 / Western).